The primary structure comprises 412 residues: Serine/threonine transporter SstT (412 aa).

10 consecutive transmembrane segments (helical) span residues 16-36 (LVAQIVVGLLAGALLALFLPG), 44-64 (LGDLFVQALKAVAPVLVFVLV), 82-102 (IIVLYALGTLSAAAVAVLASF), 115-135 (TDVIPPAGVGAVLNTLLFNIV), 141-161 (ALLNGNFIGILAWAIGLGFAF), 179-199 (VTLIVKVVIRFAPLGVFGLVA), 217-237 (LLVLVGAMLFMALVMNPLIVF), 298-318 (MGGAAITITVLTLAAVNTLGI), 330-350 (LLAAVCACGASGVAGGSLLLI), and 357-377 (FGISNDLAMQVVAVGFIIGVV).

The protein belongs to the dicarboxylate/amino acid:cation symporter (DAACS) (TC 2.A.23) family.

The protein resides in the cell inner membrane. The enzyme catalyses L-serine(in) + Na(+)(in) = L-serine(out) + Na(+)(out). The catalysed reaction is L-threonine(in) + Na(+)(in) = L-threonine(out) + Na(+)(out). Its function is as follows. Involved in the import of serine and threonine into the cell, with the concomitant import of sodium (symport system). In Stutzerimonas stutzeri (strain A1501) (Pseudomonas stutzeri), this protein is Serine/threonine transporter SstT.